The sequence spans 283 residues: Pantothenate synthetase (283 aa).

30–37 (MGALHRGH) serves as a coordination point for ATP. The active-site Proton donor is the His37. (R)-pantoate is bound at residue Gln61. Gln61 serves as a coordination point for beta-alanine. 147–150 (GQKD) contributes to the ATP binding site. Gln153 is a binding site for (R)-pantoate. ATP contacts are provided by residues Ile176 and 184–187 (MSSR).

It belongs to the pantothenate synthetase family. In terms of assembly, homodimer.

It localises to the cytoplasm. It carries out the reaction (R)-pantoate + beta-alanine + ATP = (R)-pantothenate + AMP + diphosphate + H(+). It participates in cofactor biosynthesis; (R)-pantothenate biosynthesis; (R)-pantothenate from (R)-pantoate and beta-alanine: step 1/1. Catalyzes the condensation of pantoate with beta-alanine in an ATP-dependent reaction via a pantoyl-adenylate intermediate. This chain is Pantothenate synthetase, found in Cytophaga hutchinsonii (strain ATCC 33406 / DSM 1761 / CIP 103989 / NBRC 15051 / NCIMB 9469 / D465).